The following is a 483-amino-acid chain: Glutamate--tRNA ligase (483 aa).

Positions 11 to 21 (PSPTGLLHIGN) match the 'HIGH' region motif. The short motif at 255–259 (KLSKR) is the 'KMSKS' region element. Lys258 contributes to the ATP binding site.

The protein belongs to the class-I aminoacyl-tRNA synthetase family. Glutamate--tRNA ligase type 1 subfamily. As to quaternary structure, monomer.

The protein localises to the cytoplasm. The catalysed reaction is tRNA(Glu) + L-glutamate + ATP = L-glutamyl-tRNA(Glu) + AMP + diphosphate. Catalyzes the attachment of glutamate to tRNA(Glu) in a two-step reaction: glutamate is first activated by ATP to form Glu-AMP and then transferred to the acceptor end of tRNA(Glu). The chain is Glutamate--tRNA ligase from Lactococcus lactis subsp. cremoris (strain MG1363).